The following is a 92-amino-acid chain: LYR motif-containing protein 4A (92 aa).

The protein belongs to the complex I LYR family.

This is LYR motif-containing protein 4A (lyrm4a) from Salmo salar (Atlantic salmon).